Reading from the N-terminus, the 348-residue chain is CCAAT/enhancer-binding protein beta (348 aa).

Residues M1–M24 are required for Lys-174 sumoylation. R3 carries the post-translational modification Asymmetric dimethylarginine; by CARM1. The interval M24–A135 is required for MYC transcriptional repression. Position 43 is an N6-acetyllysine; alternate (K43). Position 43 is an N6-methylated lysine; alternate (K43). Disordered stretches follow at residues A44–S65 and L79–G112. Pro residues predominate over residues A47 to P59. The 9aaTAD motif lies at D116–D124. K129 and K132 each carry N6-acetyllysine; by KAT2A and KAT2B. K133 is subject to N6-acetyllysine; by KAT2A and KAT2B; alternate. K133 is covalently cross-linked (Glycyl lysine isopeptide (Lys-Gly) (interchain with G-Cter in SUMO2); alternate). Residues A158–G178 are disordered. Positions L160–A171 are enriched in pro residues. Residue K174 forms a Glycyl lysine isopeptide (Lys-Gly) (interchain with G-Cter in SUMO2); alternate linkage. K174 participates in a covalent cross-link: Glycyl lysine isopeptide (Lys-Gly) (interchain with G-Cter in SUMO); alternate. Residues K185 and K187 each participate in a glycyl lysine isopeptide (Lys-Gly) (interchain with G-Cter in SUMO2) cross-link. Over residues S219–P259 the composition is skewed to low complexity. Positions S219–Y277 are disordered. T227 carries the post-translational modification Phosphothreonine; by GSK3-beta. O-linked (GlcNAc) serine glycans are attached at residues S228 and S229. Phosphoserine; by GSK3-beta is present on S232. T236 carries the phosphothreonine; by RPS6KA1, CDK2 and MAPK modification. Residues K263 and K265 each participate in a glycyl lysine isopeptide (Lys-Gly) (interchain with G-Cter in SUMO2) cross-link. The span at K268 to Y277 shows a compositional bias: basic and acidic residues. The residue at position 269 (T269) is a Phosphothreonine; by RPS6KA1 and PKC/PRKCA. The bZIP domain maps to S274–L337. Positions K278–R298 are basic motif. S291 is subject to Phosphoserine; by PKC/PRKCA. Positions L300 to L307 are leucine-zipper. A Phosphoserine; by CaMK2 modification is found at S328. Residue K335 forms a Glycyl lysine isopeptide (Lys-Gly) (interchain with G-Cter in SUMO2) linkage.

It belongs to the bZIP family. C/EBP subfamily. In terms of assembly, binds DNA as a homodimer and as a heterodimer. Interacts with ATF4. Binds DNA as a heterodimer with ATF4. Interacts with MYB; within the complex, MYB and CEBPB bind to different promoter regions. Can form stable heterodimers with CEBPA, CEBPD and CEBPG. Interacts with SIX1. Interacts with TRIM28 and PTGES2. Interacts with PRDM16. Interacts with CCDC85B. Forms a complex with THOC5. Interacts with ZNF638; this interaction increases transcriptional activation. Interacts with CIDEA and CIDEC; these interactions increase transcriptional activation of a subset of CEBPB downstream target genes. Interacts with DDIT3/CHOP. Interacts with EP300; recruits EP300 to chromatin. Interacts with RORA; the interaction disrupts interaction with EP300. Interacts (not methylated) with MED23, MED26, SMARCA2, SMARCB1 and SMARCC1. Interacts with KAT2A and KAT2B. Interacts with ATF5; EP300 is required for ATF5 and CEBPB interaction and DNA binding. Interacts with NFE2L1; the heterodimer represses expression of DSPP during odontoblast differentiation. In terms of processing, methylated. Methylation at Arg-3 by CARM1 and at Lys-43 by EHMT2 inhibit transactivation activity. Methylation is probably inhibited by phosphorylation at Thr-236. Post-translationally, sumoylated by polymeric chains of SUMO2 or SUMO3. Sumoylation at Lys-174 is required for inhibition of T-cells proliferation. In adipocytes, sumoylation at Lys-174 by PIAS1 leads to ubiquitination and subsequent proteasomal degradation. Desumoylated by SENP2, which abolishes ubiquitination and stabilizes protein levels. Ubiquitinated, leading to proteasomal degradation. In terms of processing, phosphorylated at Thr-236 by MAPK and CDK2, serves to prime phosphorylation at Thr-227 and Ser-232 by GSK3B and acquire DNA-binding as well as transactivation activities, required to induce adipogenesis. MAPK and CDK2 act sequentially to maintain Thr-236 in the primed phosphorylated state during mitotical cloning expansion and thereby progression of terminal differentiation. Phosphorylation at Thr-269 enhances transactivation activity. Phosphorylation at Ser-328 in response to calcium increases transactivation activity. Phosphorylated at Thr-236 by RPS6KA1. Post-translationally, O-glycosylated, glycosylation at Ser-228 and Ser-229 prevents phosphorylation on Thr-236, Ser-232 and Thr-227 and DNA binding activity which delays the adipocyte differentiation program. Acetylated. Acetylation at Lys-43 is an important and dynamic regulatory event that contributes to its ability to transactivate target genes, including those associated with adipogenesis and adipocyte function. Deacetylation by HDAC1 represses its transactivation activity. Acetylated by KAT2A and KAT2B within a cluster of lysine residues between amino acids 129-133, this acetylation is strongly induced by glucocorticoid treatment and enhances transactivation activity.

It localises to the nucleus. It is found in the cytoplasm. Its function is as follows. Important transcription factor regulating the expression of genes involved in immune and inflammatory responses. Also plays a significant role in adipogenesis, as well as in the gluconeogenic pathway, liver regeneration, and hematopoiesis. The consensus recognition site is 5'-T[TG]NNGNAA[TG]-3'. Its functional capacity is governed by protein interactions and post-translational protein modifications. During early embryogenesis, plays essential and redundant roles with CEBPA. Has a promitotic effect on many cell types such as hepatocytes and adipocytes but has an antiproliferative effect on T-cells by repressing MYC expression, facilitating differentiation along the T-helper 2 lineage. Binds to regulatory regions of several acute-phase and cytokines genes and plays a role in the regulation of acute-phase reaction and inflammation. Also plays a role in intracellular bacteria killing. During adipogenesis, is rapidly expressed and, after activation by phosphorylation, induces CEBPA and PPARG, which turn on the series of adipocyte genes that give rise to the adipocyte phenotype. The delayed transactivation of the CEBPA and PPARG genes by CEBPB appears necessary to allow mitotic clonal expansion and thereby progression of terminal differentiation. Essential for female reproduction because of a critical role in ovarian follicle development. Restricts osteoclastogenesis: together with NFE2L1; represses expression of DSPP during odontoblast differentiation. This is CCAAT/enhancer-binding protein beta (CEBPB) from Bos taurus (Bovine).